A 316-amino-acid chain; its full sequence is Olfactory receptor class A-like protein 1 (316 aa).

Over 1–8 the chain is Extracellular; sequence MDLCVTIK. A helical transmembrane segment spans residues 9-29; sequence GVSFLLQAGLGILANALVLLA. The Cytoplasmic segment spans residues 30–39; it reads YAHIRLAEAR. A helical membrane pass occupies residues 40–60; that stretch reads LQPVDAILCHLALVDLLLLLT. Over 61-97 the chain is Extracellular; it reads RGVPQTMTVFGMRNLLDDTGCKVVIYTYRIARALSVC. A disulfide bond links C81 and C169. Residues 98–118 form a helical membrane-spanning segment; sequence ITCMLSVFQAVTVAPAAGPLL. The Cytoplasmic segment spans residues 119 to 132; that stretch reads SGVKARLPQLLAPT. Residues 133-153 traverse the membrane as a helical segment; sequence FAALWFINMAVCIAAPFFSVA. The Extracellular portion of the chain corresponds to 154 to 187; it reads PRNGTVPPFTLNLGFCHVDFHDNLSYVLNGVAVS. N-linked (GlcNAc...) asparagine glycosylation is found at N156 and N176. Residues 188–208 traverse the membrane as a helical segment; that stretch reads VRDFAFVGAMLASSGFILLLL. Residues 209-233 are Cytoplasmic-facing; it reads HRHRRQVRAVRRSQGSTMETRAART. The helical transmembrane segment at 234-254 threads the bilayer; that stretch reads VLMLVILYSVFFGIDNVIWIY. The Extracellular portion of the chain corresponds to 255 to 264; it reads MLTVAQVPPV. Residues 265 to 285 form a helical membrane-spanning segment; that stretch reads VADMRVFFSSCYASLSPFLII. Residues 286-316 lie on the Cytoplasmic side of the membrane; the sequence is SSNRKLKARMVCATSEQERQAEDGKNSSGKN.

Belongs to the G-protein coupled receptor 1 family. As to expression, highly expressed in the olfactory rosette where it localizes to a subset of olfactory sensory neurons, mainly in the apical region of the neuroepithelium. Not detected in other tissues tested.

The protein resides in the cell membrane. Probable pheromone receptor. Shows high specificity for 4-hydroxyphenylacetic acid. Activation of the receptor stimulates intracellular calcium release. The protein is Olfactory receptor class A-like protein 1 of Danio rerio (Zebrafish).